We begin with the raw amino-acid sequence, 368 residues long: Isopentenyl-diphosphate delta-isomerase (368 aa).

7-8 is a binding site for substrate; sequence RK. FMN is bound by residues Thr65, 66-68, Ser96, and Asn125; that span reads GMT. 96-98 serves as a coordination point for substrate; the sequence is SQR. Residue Gln160 participates in substrate binding. Glu161 is a Mg(2+) binding site. Residues Lys193, Ser218, Thr223, 275–277, and 296–297 each bind FMN; these read GIR and AL.

It belongs to the IPP isomerase type 2 family. In terms of assembly, homooctamer. Dimer of tetramers. FMN is required as a cofactor. Requires NADPH as cofactor. It depends on Mg(2+) as a cofactor.

The protein resides in the cytoplasm. The catalysed reaction is isopentenyl diphosphate = dimethylallyl diphosphate. Functionally, involved in the biosynthesis of isoprenoids. Catalyzes the 1,3-allylic rearrangement of the homoallylic substrate isopentenyl (IPP) to its allylic isomer, dimethylallyl diphosphate (DMAPP). This chain is Isopentenyl-diphosphate delta-isomerase, found in Saccharolobus solfataricus (strain ATCC 35092 / DSM 1617 / JCM 11322 / P2) (Sulfolobus solfataricus).